Consider the following 478-residue polypeptide: Glycogen synthase (478 aa).

Residue Lys-15 coordinates ADP-alpha-D-glucose.

Belongs to the glycosyltransferase 1 family. Bacterial/plant glycogen synthase subfamily.

It carries out the reaction [(1-&gt;4)-alpha-D-glucosyl](n) + ADP-alpha-D-glucose = [(1-&gt;4)-alpha-D-glucosyl](n+1) + ADP + H(+). It functions in the pathway glycan biosynthesis; glycogen biosynthesis. Its function is as follows. Synthesizes alpha-1,4-glucan chains using ADP-glucose. The polypeptide is Glycogen synthase (Actinobacillus pleuropneumoniae serotype 5b (strain L20)).